A 591-amino-acid polypeptide reads, in one-letter code: Aspartate--tRNA(Asp/Asn) ligase (591 aa).

Residue E175 participates in L-aspartate binding. An aspartate region spans residues 199–202 (QQFK). The L-aspartate site is built by R221 and H453. An ATP-binding site is contributed by 221–223 (RDE). An ATP-binding site is contributed by E486. R493 contacts L-aspartate. 538–541 (GIDR) is an ATP binding site.

This sequence belongs to the class-II aminoacyl-tRNA synthetase family. Type 1 subfamily. As to quaternary structure, homodimer.

The protein resides in the cytoplasm. The enzyme catalyses tRNA(Asx) + L-aspartate + ATP = L-aspartyl-tRNA(Asx) + AMP + diphosphate. Its function is as follows. Aspartyl-tRNA synthetase with relaxed tRNA specificity since it is able to aspartylate not only its cognate tRNA(Asp) but also tRNA(Asn). Reaction proceeds in two steps: L-aspartate is first activated by ATP to form Asp-AMP and then transferred to the acceptor end of tRNA(Asp/Asn). This Cereibacter sphaeroides (strain ATCC 17029 / ATH 2.4.9) (Rhodobacter sphaeroides) protein is Aspartate--tRNA(Asp/Asn) ligase.